The sequence spans 291 residues: Acetyl-coenzyme A carboxylase carboxyl transferase subunit beta (291 aa).

Residues 34–291 enclose the CoA carboxyltransferase N-terminal domain; it reads MWTKCSNCNN…LILHGVNKYE (258 aa). Positions 38, 41, 57, and 60 each coordinate Zn(2+). A C4-type zinc finger spans residues 38–60; the sequence is CSNCNNMIYYEDLENNKYVCTKC.

This sequence belongs to the AccD/PCCB family. In terms of assembly, acetyl-CoA carboxylase is a heterohexamer composed of biotin carboxyl carrier protein (AccB), biotin carboxylase (AccC) and two subunits each of ACCase subunit alpha (AccA) and ACCase subunit beta (AccD). The cofactor is Zn(2+).

The protein resides in the cytoplasm. The catalysed reaction is N(6)-carboxybiotinyl-L-lysyl-[protein] + acetyl-CoA = N(6)-biotinyl-L-lysyl-[protein] + malonyl-CoA. The protein operates within lipid metabolism; malonyl-CoA biosynthesis; malonyl-CoA from acetyl-CoA: step 1/1. Its function is as follows. Component of the acetyl coenzyme A carboxylase (ACC) complex. Biotin carboxylase (BC) catalyzes the carboxylation of biotin on its carrier protein (BCCP) and then the CO(2) group is transferred by the transcarboxylase to acetyl-CoA to form malonyl-CoA. This Clostridium botulinum (strain Eklund 17B / Type B) protein is Acetyl-coenzyme A carboxylase carboxyl transferase subunit beta.